We begin with the raw amino-acid sequence, 577 residues long: Outer spore wall assembly protein SHE10 (577 aa).

The first 23 residues, 1-23 (MGKLIKLITTLTVLVSLLQYCCE), serve as a signal peptide directing secretion. Coiled coils occupy residues 379–416 (NETR…ENVE) and 513–561 (ILRS…EEDV). A compositionally biased stretch (basic and acidic residues) spans 525-545 (RERKERERKEREKAAAEEFQR). The interval 525 to 577 (RERKERERKEREKAAAEEFQRQQELLRQQEEEDEEDVSYTSTSTITTTTTMTL) is disordered. Residues 562–577 (SYTSTSTITTTTTMTL) are compositionally biased toward low complexity.

Belongs to the SHE10 family. As to quaternary structure, component of the mitochondria-localized RNase mitochondrial RNA-processing (RNase MRP) composed of one single RNA encoded by the NME1 gene and at least 31 proteins. Absent in the nucleus-localized RNase MRP (NuMRP).

It is found in the mitochondrion. Its function is as follows. Involved in spore wall assembly. May be a component of the mitochondrial RNase MRP (MtMRP), a ribonucleoprotein endoribonuclease involved in the cleaving RNA transcripts to generate primers for DNA replication in mitochondria. The sequence is that of Outer spore wall assembly protein SHE10 from Saccharomyces cerevisiae (strain YJM789) (Baker's yeast).